We begin with the raw amino-acid sequence, 431 residues long: uncharacterized protein (431 aa).

Residues 1–258 (MPSQMREAIT…HGLIDLERAG (258 aa)) form the Peptidase S8 domain.

Belongs to the peptidase S8 family.

This is an uncharacterized protein from Sinorhizobium fredii (strain NBRC 101917 / NGR234).